Consider the following 212-residue polypeptide: ER lumen protein-retaining receptor 1-B (212 aa).

Residues 1 to 4 (MNIF) lie on the Lumenal side of the membrane. The chain crosses the membrane as a helical span at residues 5-24 (RFLGDISHLSAIIILLLKIW). At 25-32 (KSRSCAGI) the chain is on the cytoplasmic side. A helical membrane pass occupies residues 33-52 (SGKSQLLFAIVFTTRYLDLF). The interval 47-48 (RY) is interaction with the K-D-E-L motif on target proteins. Residues 53–58 (TNFISF) are Lumenal-facing. A helical membrane pass occupies residues 59–79 (YNTSMKVVYVASSYATVWMIY). Residues 80-92 (SKFKATYDGNHDT) lie on the Cytoplasmic side of the membrane. A helical membrane pass occupies residues 93-110 (FRVEFLIVPTAILSFLVN). The Lumenal portion of the chain corresponds to 111 to 116 (HDFTPL). Residues 117–135 (EILWTFSIYLESVAILPQL) form a helical membrane-spanning segment. The Cytoplasmic segment spans residues 136-149 (FMVSKTGEAETITS). Residues 150 to 168 (HYLFALGIYRTLYLFNWIW) form a helical membrane-spanning segment. Residues 159 to 169 (RTLYLFNWIWR) form an interaction with the K-D-E-L motif on target proteins region. At 169–178 (RYQFEEFFDL) the chain is on the lumenal side. The helical transmembrane segment at 179–199 (IAIVAGLVQTVLYCDFFYLYI) threads the bilayer. Residues 200–212 (TKVLKGKKLSLPA) lie on the Cytoplasmic side of the membrane. The important for recycling of cargo proteins with the sequence motif K-D-E-L from the Golgi to the endoplasmic reticulum stretch occupies residues 204–207 (KGKK).

It belongs to the ERD2 family.

It is found in the golgi apparatus membrane. The protein localises to the cytoplasmic vesicle. It localises to the COPI-coated vesicle membrane. The protein resides in the endoplasmic reticulum membrane. Its subcellular location is the endoplasmic reticulum-Golgi intermediate compartment membrane. In terms of biological role, receptor for the C-terminal sequence motif K-D-E-L that is present on endoplasmic reticulum resident proteins and that mediates their recycling from the Golgi back to the endoplasmic reticulum. This chain is ER lumen protein-retaining receptor 1-B (kdelr1-b), found in Xenopus laevis (African clawed frog).